The following is a 373-amino-acid chain: Alcohol dehydrogenase 2 (373 aa).

Zn(2+) contacts are provided by Cys47, Thr49, His69, Cys99, Cys102, Cys105, Cys113, and Cys177. An alcohol-binding residues include Thr49 and His69. Residue Thr49 coordinates NAD(+). NAD(+) is bound by residues 202–207 (GLGAVG), Asp226, Lys231, Thr272, Phe316, and Arg366.

Belongs to the zinc-containing alcohol dehydrogenase family. As to quaternary structure, homodimer. Zn(2+) serves as cofactor.

It is found in the cytoplasm. The enzyme catalyses a primary alcohol + NAD(+) = an aldehyde + NADH + H(+). It carries out the reaction a secondary alcohol + NAD(+) = a ketone + NADH + H(+). The protein is Alcohol dehydrogenase 2 (ADH2) of Hordeum vulgare (Barley).